The primary structure comprises 726 residues: Catalase-peroxidase (726 aa).

Positions Met-1–Ser-33 are disordered. A cross-link (tryptophyl-tyrosyl-methioninium (Trp-Tyr) (with M-252)) is located at residues Trp-105 to Tyr-226. The active-site Proton acceptor is His-106. Positions Tyr-226–Met-252 form a cross-link, tryptophyl-tyrosyl-methioninium (Tyr-Met) (with W-105). His-267 contributes to the heme b binding site.

The protein belongs to the peroxidase family. Peroxidase/catalase subfamily. As to quaternary structure, homodimer or homotetramer. Requires heme b as cofactor. In terms of processing, formation of the three residue Trp-Tyr-Met cross-link is important for the catalase, but not the peroxidase activity of the enzyme.

It catalyses the reaction H2O2 + AH2 = A + 2 H2O. The enzyme catalyses 2 H2O2 = O2 + 2 H2O. Its function is as follows. Bifunctional enzyme with both catalase and broad-spectrum peroxidase activity. The sequence is that of Catalase-peroxidase from Salmonella paratyphi B (strain ATCC BAA-1250 / SPB7).